Consider the following 116-residue polypeptide: MGGRDQITNLGSEGETHPWGYSSPPYPLHTFFIPFLPSGFGGSGLGIPSDNEKHDLQDCVEVSRPEGPAPELPSSLCGWNKISSLCGLGFPSRDPKTWDLAMLLSPWVDFFELQLL.

As to expression, seems to be expressed only in testis.

This is Putative BPES syndrome breakpoint region protein (BPESC1) from Homo sapiens (Human).